A 472-amino-acid chain; its full sequence is Eukaryotic translation initiation factor 2 subunit 3 (472 aa).

Ala2 bears the N-acetylalanine mark. Phosphoserine is present on Ser16. The 210-residue stretch at 39–248 (QATINIGTIG…IVKKIPVPPR (210 aa)) folds into the tr-type G domain. A G1 region spans residues 48 to 55 (GHVAHGKS). A GTP-binding site is contributed by 51–56 (AHGKST). A G2 region spans residues 76 to 80 (NITIK). Positions 134–137 (DCPG) are G3. Residues 190–193 (NKID) and 225–227 (SAQ) each bind GTP. The interval 190 to 193 (NKID) is G4. The G5 stretch occupies residues 225 to 227 (SAQ). Residues 457 to 469 (GQIRRGVTIKPTV) are interacts with CDC123.

It belongs to the TRAFAC class translation factor GTPase superfamily. Classic translation factor GTPase family. EIF2G subfamily. Eukaryotic translation initiation factor 2 eIF2 is a heterotrimeric complex composed of an alpha (EIF2S1), a beta (EIF2S2) and a gamma (EIF2S3) chain. eIF2 is member of the 43S pre-initiation complex (43S PIC). Interacts (via C-terminus) with CDC123; the interaction is direct.

Its subcellular location is the cytoplasm. The protein resides in the cytosol. The enzyme catalyses GTP + H2O = GDP + phosphate + H(+). Functionally, member of the eIF2 complex that functions in the early steps of protein synthesis by forming a ternary complex with GTP and initiator tRNA. This complex binds to a 40S ribosomal subunit, followed by mRNA binding to form the 43S pre-initiation complex (43S PIC). Junction of the 60S ribosomal subunit to form the 80S initiation complex is preceded by hydrolysis of the GTP bound to eIF2 and release of an eIF2-GDP binary complex. In order for eIF2 to recycle and catalyze another round of initiation, the GDP bound to eIF2 must exchange with GTP by way of a reaction catalyzed by eIF-2B. The sequence is that of Eukaryotic translation initiation factor 2 subunit 3 (EIF2S3) from Sus scrofa (Pig).